Reading from the N-terminus, the 240-residue chain is MAPK-interacting and spindle-stabilizing protein-like (240 aa).

The disordered stretch occupies residues 1–240 (MSDEFSLADA…PMPGGPHSYH (240 aa)). S2 carries the post-translational modification N-acetylserine. Phosphoserine occurs at positions 2, 6, and 15. Polar residues predominate over residues 16–26 (PAKTSAVSNTK). Positions 34-43 (WPGSNPWNNP) are enriched in low complexity. Pro residues-rich tracts occupy residues 44-66 (SAPP…PFGP), 74-122 (SVPP…PELP), 159-185 (PNMP…PPVP), and 193-202 (AWGPPAPYPA).

This sequence belongs to the MISS family.

In Bos taurus (Bovine), this protein is MAPK-interacting and spindle-stabilizing protein-like (MAPK1IP1L).